The primary structure comprises 475 residues: Aspartic proteinase 39 (475 aa).

Positions 1-23 (MELRRKLCIVVAVFVIVIEFASA) are cleaved as a signal peptide. A Peptidase A1 domain is found at 74–422 (YFTKIKLGSP…DLDNEVIGWA (349 aa)). Asp92 is a catalytic residue. N-linked (GlcNAc...) asparagine glycosylation is found at Asn124 and Asn222. Asp303 is an active-site residue. N-linked (GlcNAc...) asparagine glycans are attached at residues Asn425 and Asn446. Residue Ser449 is the site of GPI-anchor amidated serine attachment. Positions 450–475 (APRLLMITKLLTILSPLIVMAFTSLA) are cleaved as a propeptide — removed in mature form.

It belongs to the peptidase A1 family. Highly expressed in pollen and pollen tubes. Mostly expressed in inflorescence, flowers and siliques, and barely in leaves and seedlings.

The protein resides in the cell membrane. It is found in the cytoplasm. The protein localises to the cytosol. In terms of biological role, displays aspartic proteolytic activity. Together with A36, contributes to pollen and ovule development, including the apical cell wall constitution of the growing pollen tubes. The polypeptide is Aspartic proteinase 39 (Arabidopsis thaliana (Mouse-ear cress)).